Consider the following 237-residue polypeptide: Lycopene beta-cyclase (237 aa).

The next 7 membrane-spanning stretches (helical) occupy residues Thr3–Val23, Val38–Ala58, Glu80–Leu100, Ala113–Val133, Phe137–Gly157, Ala170–Trp192, and Ala213–Leu233.

Belongs to the lycopene beta-cyclase family.

The protein localises to the cell membrane. The enzyme catalyses a carotenoid psi-end group = a carotenoid beta-end derivative. The catalysed reaction is all-trans-lycopene = gamma-carotene. It catalyses the reaction gamma-carotene = all-trans-beta-carotene. It functions in the pathway carotenoid biosynthesis; beta-carotene biosynthesis. In terms of biological role, catalyzes the cyclization of both ends of lycopene to form beta-carotene, a retinal precursor. Is required for bacteriorhodopsin biogenesis, a light-driven proton pump with a covalently bound retinal cofactor. The polypeptide is Lycopene beta-cyclase (Halobacterium salinarum (strain ATCC 29341 / DSM 671 / R1)).